The following is a 349-amino-acid chain: Phosphate acyltransferase (349 aa).

This sequence belongs to the PlsX family. As to quaternary structure, homodimer. Probably interacts with PlsY.

The protein resides in the cytoplasm. The enzyme catalyses a fatty acyl-[ACP] + phosphate = an acyl phosphate + holo-[ACP]. The protein operates within lipid metabolism; phospholipid metabolism. In terms of biological role, catalyzes the reversible formation of acyl-phosphate (acyl-PO(4)) from acyl-[acyl-carrier-protein] (acyl-ACP). This enzyme utilizes acyl-ACP as fatty acyl donor, but not acyl-CoA. This chain is Phosphate acyltransferase, found in Albidiferax ferrireducens (strain ATCC BAA-621 / DSM 15236 / T118) (Rhodoferax ferrireducens).